Consider the following 186-residue polypeptide: Elongation factor P (186 aa).

It belongs to the elongation factor P family.

The protein resides in the cytoplasm. It participates in protein biosynthesis; polypeptide chain elongation. In terms of biological role, involved in peptide bond synthesis. Stimulates efficient translation and peptide-bond synthesis on native or reconstituted 70S ribosomes in vitro. Probably functions indirectly by altering the affinity of the ribosome for aminoacyl-tRNA, thus increasing their reactivity as acceptors for peptidyl transferase. The protein is Elongation factor P of Prochlorococcus marinus (strain MIT 9301).